The primary structure comprises 236 residues: MADS-box transcription factor 3 (236 aa).

The region spanning Met1–Ser61 is the MADS-box domain. The K-box domain maps to Ala87–Gly178.

As to expression, expressed in lemmas, paleas and lodicules.

It is found in the nucleus. In terms of biological role, probable transcription factor involved in the development of floral organs. Acts as C-class protein in association with MADS58. Involved in the control of lodicule number (whorl 2), stamen specification (whorl 3) and floral meristem determinacy (whorl 4), but not in the regulation of carpel morphogenesis. Plays a more predominant role in controlling lodicule development and in specifying stamen identity than MADS58. The chain is MADS-box transcription factor 3 (MADS3) from Oryza sativa subsp. japonica (Rice).